Consider the following 53-residue polypeptide: uncharacterized protein (53 aa).

2 consecutive transmembrane segments (helical) span residues 3–22 (LFGM…GVLL) and 26–45 (AFFF…FTVL).

The protein localises to the cell membrane. This is an uncharacterized protein from Bacillus subtilis (strain 168).